Consider the following 196-residue polypeptide: Holliday junction branch migration complex subunit RuvA (196 aa).

Positions 1-62 are domain I; the sequence is MYEYINGLIT…ENEMTLYGFI (62 aa). The interval 63–141 is domain II; that stretch reads DENEKYLFNK…DLALSAGMTV (79 aa). The interval 142–146 is flexible linker; it reads ETVPT. Residues 147-196 are domain III; sequence TDNQALADALAALESLGYSAKDVAKLQTVLANQKDTTDGYIRSALKFLVK.

This sequence belongs to the RuvA family. In terms of assembly, homotetramer. Forms an RuvA(8)-RuvB(12)-Holliday junction (HJ) complex. HJ DNA is sandwiched between 2 RuvA tetramers; dsDNA enters through RuvA and exits via RuvB. An RuvB hexamer assembles on each DNA strand where it exits the tetramer. Each RuvB hexamer is contacted by two RuvA subunits (via domain III) on 2 adjacent RuvB subunits; this complex drives branch migration. In the full resolvosome a probable DNA-RuvA(4)-RuvB(12)-RuvC(2) complex forms which resolves the HJ.

It localises to the cytoplasm. In terms of biological role, the RuvA-RuvB-RuvC complex processes Holliday junction (HJ) DNA during genetic recombination and DNA repair, while the RuvA-RuvB complex plays an important role in the rescue of blocked DNA replication forks via replication fork reversal (RFR). RuvA specifically binds to HJ cruciform DNA, conferring on it an open structure. The RuvB hexamer acts as an ATP-dependent pump, pulling dsDNA into and through the RuvAB complex. HJ branch migration allows RuvC to scan DNA until it finds its consensus sequence, where it cleaves and resolves the cruciform DNA. The sequence is that of Holliday junction branch migration complex subunit RuvA from Leuconostoc citreum (strain KM20).